The chain runs to 353 residues: Uroporphyrinogen decarboxylase (353 aa).

Substrate-binding positions include 35–39 (RQAGR), F54, D84, Y160, S215, and H329.

This sequence belongs to the uroporphyrinogen decarboxylase family. As to quaternary structure, homodimer.

It localises to the cytoplasm. The enzyme catalyses uroporphyrinogen III + 4 H(+) = coproporphyrinogen III + 4 CO2. The protein operates within porphyrin-containing compound metabolism; protoporphyrin-IX biosynthesis; coproporphyrinogen-III from 5-aminolevulinate: step 4/4. Functionally, catalyzes the decarboxylation of four acetate groups of uroporphyrinogen-III to yield coproporphyrinogen-III. In Staphylococcus epidermidis (strain ATCC 12228 / FDA PCI 1200), this protein is Uroporphyrinogen decarboxylase.